Here is a 271-residue protein sequence, read N- to C-terminus: Ferric vulnibactin reductase VuuB (271 aa).

An FAD-binding FR-type domain is found at 8–131 (VYPMLLDFVR…IGPAGPDPLI (124 aa)).

The protein belongs to the SIP oxidoreductase family. As to quaternary structure, monomer. The cofactor is FAD.

The protein resides in the cytoplasm. The catalysed reaction is 2 a Fe(II)-siderophore + NAD(+) + H(+) = 2 a Fe(III)-siderophore + NADH. In terms of biological role, ferric-siderophore reductase involved in iron removal from the siderophores after their transport into the cell. Acts as a major ferric-vulnibactin reductase catalyzing the reduction of Fe(3+)-vulnibactin, a catecholate siderophore synthesized by V.vulnificus. Catalyzes reduction of Fe(3+)-aerobactin, a citrate-hydroxamate siderophore produced by other bacteria, in the absence of IutB. Catalyzes reduction of Fe(3+)-vibriobactin in vitro. No activity with ferrioxamine B or Fe(3+)-enterobactin. Catalyzes reduction of ferric chelating compounds Fe(3+)-nitrilotriacetic acid (NTA), Fe(3+)-citrate and Fe(3+)-EDTA as well as non-complexed FeCl3 in the presence of NADH as its electron donor and FAD as its cofactor in vitro. Highest activity with Fe(3+)-NTA as electron acceptor. The polypeptide is Ferric vulnibactin reductase VuuB (Vibrio vulnificus).